Consider the following 311-residue polypeptide: Taste receptor type 2 member 9 (311 aa).

The Extracellular portion of the chain corresponds to 1-9 (MPSTIEAIY). A helical transmembrane segment spans residues 10-32 (IILIAGELTIGIWGNGFIVLVNC). Over 33–52 (IDWLKRRDVSLIDIILISLA) the chain is Cytoplasmic. Residues 53–72 (ISRICLLCVISLDGFFILLF) form a helical membrane-spanning segment. Residues 73–86 (PGTYDTNVLESIMD) are Extracellular-facing. Residues 87 to 109 (AVWTFANNSSLWFTSCLSIFYLL) traverse the membrane as a helical segment. Residues 110-128 (KIANISHPFFFWLKLKINK) lie on the Cytoplasmic side of the membrane. A helical transmembrane segment spans residues 129-146 (VILAILLGSFLISLIISF). Residues 147–179 (PINGMWYNLFKVSHEENITWAFKVSTIPGAFKQ) lie on the Extracellular side of the membrane. N-linked (GlcNAc...) asparagine glycosylation occurs at Asn163. Residues 180–202 (LTLNLGAMVPFILCLISFFLLLF) traverse the membrane as a helical segment. Over 203–233 (SLVRHTKQIQLHATGFRDPSTEAHMRAVKAV) the chain is Cytoplasmic. The chain crosses the membrane as a helical span at residues 234–256 (IIFLLLLILYYPVFLVMTSSTLI). At 257-260 (PQGK) the chain is on the extracellular side. Residues 261–283 (LVLMIGDIVTVIFPSSHSFILIM) traverse the membrane as a helical segment. The Cytoplasmic portion of the chain corresponds to 284–311 (GNSKLRAAFLKMLRFVKGFLRRRKPFVP).

It belongs to the G-protein coupled receptor T2R family.

The protein localises to the membrane. Functionally, gustducin-coupled receptor implicated in the perception of bitter compounds in the oral cavity and the gastrointestinal tract. Signals through PLCB2 and the calcium-regulated cation channel TRPM5. This chain is Taste receptor type 2 member 9 (TAS2R9), found in Macaca mulatta (Rhesus macaque).